A 375-amino-acid polypeptide reads, in one-letter code: Growth/differentiation factor 8 (375 aa).

A signal peptide spans 1–18; it reads MQKLQISVYIYLFMLIVA. Positions 19–266 are excised as a propeptide; it reads GPVDLNENSE…VTDTPKRSRR (248 aa). Asn71 carries N-linked (GlcNAc...) asparagine glycosylation. Cystine bridges form between Cys272–Cys282, Cys281–Cys340, Cys309–Cys372, and Cys313–Cys374.

It belongs to the TGF-beta family. Homodimer; disulfide-linked. Interacts with WFIKKN2, leading to inhibit its activity. Interacts with FSTL3. Post-translationally, synthesized as large precursor molecule that undergoes proteolytic cleavage to generate an N-terminal propeptide and a disulfide linked C-terminal dimer, which is the biologically active molecule. The circulating form consists of a latent complex of the C-terminal dimer and other proteins, including its propeptide, which maintain the C-terminal dimer in a latent, inactive state. Ligand activation requires additional cleavage of the prodomain by a tolloid-like metalloproteinase.

It localises to the secreted. Functionally, acts specifically as a negative regulator of skeletal muscle growth. The sequence is that of Growth/differentiation factor 8 (MSTN) from Lepus capensis (Brown hare).